The chain runs to 495 residues: UDP-N-acetylmuramoyl-L-alanyl-D-glutamate--2,6-diaminopimelate ligase (495 aa).

UDP-N-acetyl-alpha-D-muramoyl-L-alanyl-D-glutamate is bound by residues Leu-27, Ser-29, and His-44 to Ala-46. Residue Gly-116 to Thr-122 coordinates ATP. UDP-N-acetyl-alpha-D-muramoyl-L-alanyl-D-glutamate contacts are provided by residues Asn-157, Thr-158–Thr-159, Ser-185, Gln-191, and Arg-193. The residue at position 225 (Lys-225) is an N6-carboxylysine. Meso-2,6-diaminopimelate contacts are provided by residues Arg-390, Asp-414–Arg-417, Gly-465, and Glu-469. The Meso-diaminopimelate recognition motif signature appears at Asp-414–Arg-417.

It belongs to the MurCDEF family. MurE subfamily. Mg(2+) serves as cofactor. Post-translationally, carboxylation is probably crucial for Mg(2+) binding and, consequently, for the gamma-phosphate positioning of ATP.

It localises to the cytoplasm. It carries out the reaction UDP-N-acetyl-alpha-D-muramoyl-L-alanyl-D-glutamate + meso-2,6-diaminopimelate + ATP = UDP-N-acetyl-alpha-D-muramoyl-L-alanyl-gamma-D-glutamyl-meso-2,6-diaminopimelate + ADP + phosphate + H(+). Its pathway is cell wall biogenesis; peptidoglycan biosynthesis. Its function is as follows. Catalyzes the addition of meso-diaminopimelic acid to the nucleotide precursor UDP-N-acetylmuramoyl-L-alanyl-D-glutamate (UMAG) in the biosynthesis of bacterial cell-wall peptidoglycan. This chain is UDP-N-acetylmuramoyl-L-alanyl-D-glutamate--2,6-diaminopimelate ligase, found in Enterobacter sp. (strain 638).